Reading from the N-terminus, the 491-residue chain is Cobyric acid synthase (491 aa).

The GATase cobBQ-type domain maps to 253-429; the sequence is AHRVAVVRLP…WHGSLEGDAL (177 aa). Cysteine 334 serves as the catalytic Nucleophile. The active site involves histidine 421.

This sequence belongs to the CobB/CobQ family. CobQ subfamily.

It functions in the pathway cofactor biosynthesis; adenosylcobalamin biosynthesis. Catalyzes amidations at positions B, D, E, and G on adenosylcobyrinic A,C-diamide. NH(2) groups are provided by glutamine, and one molecule of ATP is hydrogenolyzed for each amidation. The protein is Cobyric acid synthase of Mycobacterium marinum (strain ATCC BAA-535 / M).